Here is a 361-residue protein sequence, read N- to C-terminus: ATP-dependent 6-phosphofructokinase 1 (361 aa).

ATP-binding positions include Gly-14, Lys-79–Gly-80, and Gly-116–Ser-119. Mg(2+) is bound at residue Asp-117. Residues Thr-140–Asp-142, Arg-177, Met-184–Arg-186, Glu-237, Arg-278, and His-284–Arg-287 contribute to the substrate site. Asp-142 (proton acceptor) is an active-site residue.

The protein belongs to the phosphofructokinase type A (PFKA) family. Mixed-substrate PFK group III subfamily. As to quaternary structure, homodimer or homotetramer. The cofactor is Mg(2+).

The protein resides in the cytoplasm. It catalyses the reaction beta-D-fructose 6-phosphate + ATP = beta-D-fructose 1,6-bisphosphate + ADP + H(+). It functions in the pathway carbohydrate degradation; glycolysis; D-glyceraldehyde 3-phosphate and glycerone phosphate from D-glucose: step 3/4. Its function is as follows. Catalyzes the phosphorylation of D-fructose 6-phosphate to fructose 1,6-bisphosphate by ATP, the first committing step of glycolysis. This chain is ATP-dependent 6-phosphofructokinase 1, found in Synechocystis sp. (strain ATCC 27184 / PCC 6803 / Kazusa).